The chain runs to 176 residues: dCTP deaminase (176 aa).

DCTP contacts are provided by residues 102-107 and Asp118; that span reads RSTFAR. The Proton donor/acceptor role is filled by Glu128. Residues Tyr160, Lys166, and Gln167 each coordinate dCTP.

The protein belongs to the dCTP deaminase family. As to quaternary structure, homotrimer.

The enzyme catalyses dCTP + H2O + H(+) = dUTP + NH4(+). The protein operates within pyrimidine metabolism; dUMP biosynthesis; dUMP from dCTP (dUTP route): step 1/2. Its function is as follows. Catalyzes the deamination of dCTP to dUTP. The chain is dCTP deaminase from Staphylothermus marinus (strain ATCC 43588 / DSM 3639 / JCM 9404 / F1).